The following is a 274-amino-acid chain: Ethanolamine ammonia-lyase small subunit (274 aa).

Positions 161, 182, and 211 each coordinate adenosylcob(III)alamin.

It belongs to the EutC family. As to quaternary structure, the basic unit is a heterodimer which dimerizes to form tetramers. The heterotetramers trimerize; 6 large subunits form a core ring with 6 small subunits projecting outwards. The cofactor is adenosylcob(III)alamin.

Its subcellular location is the bacterial microcompartment. It catalyses the reaction ethanolamine = acetaldehyde + NH4(+). It participates in amine and polyamine degradation; ethanolamine degradation. In terms of biological role, catalyzes the deamination of various vicinal amino-alcohols to oxo compounds. Allows this organism to utilize ethanolamine as the sole source of nitrogen and carbon in the presence of external vitamin B12. This Pseudomonas fluorescens (strain Pf0-1) protein is Ethanolamine ammonia-lyase small subunit.